A 129-amino-acid chain; its full sequence is ATP synthase epsilon chain (129 aa).

It belongs to the ATPase epsilon chain family. F-type ATPases have 2 components, CF(1) - the catalytic core - and CF(0) - the membrane proton channel. CF(1) has five subunits: alpha(3), beta(3), gamma(1), delta(1), epsilon(1). CF(0) has three main subunits: a, b and c.

The protein localises to the cell inner membrane. In terms of biological role, produces ATP from ADP in the presence of a proton gradient across the membrane. In Nitratiruptor sp. (strain SB155-2), this protein is ATP synthase epsilon chain.